We begin with the raw amino-acid sequence, 337 residues long: C5a anaphylatoxin chemotactic receptor 2 (337 aa).

Over 1–38 the chain is Extracellular; the sequence is MGNDSVSYEYGDYSDLSDRPVDCLDGACLAIDPLRVAP. N-linked (GlcNAc...) asparagine glycosylation occurs at N3. The chain crosses the membrane as a helical span at residues 39 to 61; the sequence is LPLYAAIFLVGVPGNAMVAWVAG. Topologically, residues 62 to 72 are cytoplasmic; the sequence is KVARRRVGATW. A helical transmembrane segment spans residues 73–95; sequence LLHLAVADLLCCLSLPILAVPIA. At 96 to 114 the chain is on the extracellular side; it reads RGGHWPYGAVGCRALPSII. C107 and C186 form a disulfide bridge. A helical transmembrane segment spans residues 115–137; that stretch reads LLTMYASVLLLAALSADLCFLAL. Topologically, residues 138 to 149 are cytoplasmic; that stretch reads GPAWWSTVQRAC. A helical transmembrane segment spans residues 150 to 172; the sequence is GVQVACGAAWTLALLLTVPSAIY. The Extracellular portion of the chain corresponds to 173–202; it reads RRLHQEHFPARLQCVVDYGGSSSTENAVTA. A helical membrane pass occupies residues 203-225; that stretch reads IRFLFGFLGPLVAVASCHSALLC. At 226-237 the chain is on the cytoplasmic side; sequence WAARRCRPLGTA. The chain crosses the membrane as a helical span at residues 238–260; sequence IVVGFFVCWAPYHLLGLVLTVAA. The Extracellular segment spans residues 261–274; sequence PNSALLARALRAEP. The chain crosses the membrane as a helical span at residues 275-294; the sequence is LIVGLALAHSCLNPMLFLYF. The Cytoplasmic segment spans residues 295 to 337; it reads GRAQLRRSLPAACHWALRESQGQDESVDSKKSTSHDLVSEMEV. The residue at position 320 (S320) is a Phosphoserine.

It belongs to the G-protein coupled receptor 1 family. As to quaternary structure, interacts with C3 (the anaphylatoxin peptide C3a and the adipogenic hormone ASP); the interaction occurs with higher affinity for ASP, enhancing the phosphorylation and activation of GPR77, recruitment of ARRB2 to the cell surface and endocytosis of GRP77. Frontal cortex, hippocampus, hypothalamus, pons and liver.

Its subcellular location is the cell membrane. Its function is as follows. Receptor for the chemotactic and inflammatory C3a, C4a and C5a anaphylatoxin peptides and also for their dearginated forms ASP/C3adesArg, C4adesArg and C5adesArg respectively. Couples weakly to G(i)-mediated signaling pathways. The protein is C5a anaphylatoxin chemotactic receptor 2 (C5AR2) of Homo sapiens (Human).